The primary structure comprises 732 residues: Catalase-peroxidase (732 aa).

The interval 1–21 (MSMAEMRCPFSGHGAATTPAS) is disordered. The N-terminal stretch at 1–22 (MSMAEMRCPFSGHGAATTPASA) is a signal peptide. The tryptophyl-tyrosyl-methioninium (Trp-Tyr) (with M-246) cross-link spans 97–220 (WHSAGTYRLA…LAATEMGLIY (124 aa)). His98 acts as the Proton acceptor in catalysis. Residues 220-246 (YVNPEGPHGEPDPVASGREVRDTFARM) constitute a cross-link (tryptophyl-tyrosyl-methioninium (Tyr-Met) (with W-97)). His261 serves as a coordination point for heme b.

The protein belongs to the peroxidase family. Peroxidase/catalase subfamily. In terms of assembly, homodimer or homotetramer. The cofactor is heme b. Post-translationally, formation of the three residue Trp-Tyr-Met cross-link is important for the catalase, but not the peroxidase activity of the enzyme.

It carries out the reaction H2O2 + AH2 = A + 2 H2O. The enzyme catalyses 2 H2O2 = O2 + 2 H2O. In terms of biological role, bifunctional enzyme with both catalase and broad-spectrum peroxidase activity. The protein is Catalase-peroxidase of Synechococcus sp. (strain RCC307).